We begin with the raw amino-acid sequence, 227 residues long: MHIEKLDFENSPYLGVFGIATDKVVLIREGLQEKKLEVIREVLKVPVVEASLMKSRIIGVLGAGNSNAIIVPWYVWDSELEKIKNAFREYGIDTEVVPFQTKYTALGNLILTNDKGALVSSKFSREEAKKIGDILGVEVERGVIAGIVAVGSAGVVTNKGGLVHPEATDEELEWLSDLFKVDVYVGTANMGVPYVGSCMLANSYGVVVGHLTTGPEIVKIEEALGFI.

Belongs to the eIF-6 family.

Binds to the 50S ribosomal subunit and prevents its association with the 30S ribosomal subunit to form the 70S initiation complex. The chain is Translation initiation factor 6 from Pyrococcus furiosus (strain ATCC 43587 / DSM 3638 / JCM 8422 / Vc1).